A 252-amino-acid chain; its full sequence is Small ribosomal subunit protein eS1B (252 aa).

A2 carries the post-translational modification N-acetylalanine; partial. S251 is modified (phosphoserine).

This sequence belongs to the eukaryotic ribosomal protein eS1 family. In terms of assembly, component of the small ribosomal subunit (SSU). Mature yeast ribosomes consist of a small (40S) and a large (60S) subunit. The 40S small subunit contains 1 molecule of ribosomal RNA (18S rRNA) and at least 33 different proteins. The large 60S subunit contains 3 rRNA molecules (25S, 5.8S and 5S rRNA) and at least 46 different proteins. eS1 interacts directly with uS11 and eS26, which form part of the mRNA exit tunnel.

The protein localises to the cytoplasm. Functionally, component of the ribosome, a large ribonucleoprotein complex responsible for the synthesis of proteins in the cell. The small ribosomal subunit (SSU) binds messenger RNAs (mRNAs) and translates the encoded message by selecting cognate aminoacyl-transfer RNA (tRNA) molecules. The large subunit (LSU) contains the ribosomal catalytic site termed the peptidyl transferase center (PTC), which catalyzes the formation of peptide bonds, thereby polymerizing the amino acids delivered by tRNAs into a polypeptide chain. The nascent polypeptides leave the ribosome through a tunnel in the LSU and interact with protein factors that function in enzymatic processing, targeting, and the membrane insertion of nascent chains at the exit of the ribosomal tunnel. This chain is Small ribosomal subunit protein eS1B (rps102), found in Schizosaccharomyces pombe (strain 972 / ATCC 24843) (Fission yeast).